Reading from the N-terminus, the 187-residue chain is Adenylate kinase (187 aa).

ATP is bound at residue 11–16 (GAGKGT). The NMP stretch occupies residues 31–60 (STGDILREAVKNQTAMGIEAKRYMDAGDLV). Residues T32, R37, 58–60 (DLV), 86–89 (GFPR), and Q93 contribute to the AMP site. The LID stretch occupies residues 127–137 (GRAEIEGRADD). R128 is a binding site for ATP. R134 and R145 together coordinate AMP. G173 serves as a coordination point for ATP.

This sequence belongs to the adenylate kinase family. Monomer.

It is found in the cytoplasm. The catalysed reaction is AMP + ATP = 2 ADP. The protein operates within purine metabolism; AMP biosynthesis via salvage pathway; AMP from ADP: step 1/1. Functionally, catalyzes the reversible transfer of the terminal phosphate group between ATP and AMP. Plays an important role in cellular energy homeostasis and in adenine nucleotide metabolism. This Leptospira interrogans serogroup Icterohaemorrhagiae serovar copenhageni (strain Fiocruz L1-130) protein is Adenylate kinase.